A 763-amino-acid chain; its full sequence is Phosphoglycerol transferase I (763 aa).

The next 4 helical transmembrane spans lie at 1 to 21 (MSEL…AWKA), 24 to 44 (NTWW…LNIT), 77 to 97 (ILPG…LGWI), and 108 to 128 (VGYS…SPAF).

Belongs to the OpgB family.

The protein localises to the cell inner membrane. The catalysed reaction is a phosphatidylglycerol + a membrane-derived-oligosaccharide D-glucose = a 1,2-diacyl-sn-glycerol + a membrane-derived-oligosaccharide 6-(glycerophospho)-D-glucose.. Its pathway is glycan metabolism; osmoregulated periplasmic glucan (OPG) biosynthesis. In terms of biological role, transfers a phosphoglycerol residue from phosphatidylglycerol to the membrane-bound nascent glucan backbones. In Salmonella arizonae (strain ATCC BAA-731 / CDC346-86 / RSK2980), this protein is Phosphoglycerol transferase I.